Consider the following 155-residue polypeptide: Small ribosomal subunit protein uS7c (155 aa).

This sequence belongs to the universal ribosomal protein uS7 family. As to quaternary structure, part of the 30S ribosomal subunit.

The protein resides in the plastid. The protein localises to the chloroplast. One of the primary rRNA binding proteins, it binds directly to 16S rRNA where it nucleates assembly of the head domain of the 30S subunit. In Cornus mas (Cornelian cherry dogwood), this protein is Small ribosomal subunit protein uS7c (rps7).